Reading from the N-terminus, the 326-residue chain is Thrombopoietin (326 aa).

The first 21 residues, 1-21, serve as a signal peptide directing secretion; sequence MELTDLLLVAILLLTARLTLS. 2 cysteine pairs are disulfide-bonded: cysteine 28–cysteine 172 and cysteine 50–cysteine 106. N-linked (GlcNAc...) asparagine glycosylation is found at asparagine 197, asparagine 206, asparagine 235, asparagine 249, and asparagine 256. The disordered stretch occupies residues 307-326; sequence FPPSPTFPTPGSPPQLPPVS. Positions 308–326 are enriched in pro residues; sequence PPSPTFPTPGSPPQLPPVS.

It belongs to the EPO/TPO family.

The protein resides in the secreted. Its function is as follows. Lineage-specific cytokine affecting the proliferation and maturation of megakaryocytes from their committed progenitor cells. It acts at a late stage of megakaryocyte development. It may be the major physiological regulator of circulating platelets. The sequence is that of Thrombopoietin (Thpo) from Rattus norvegicus (Rat).